A 687-amino-acid chain; its full sequence is Adhesion G-protein coupled receptor G1 (687 aa).

Positions 1-25 (MAVQVLRQMVYFLLSLFSLVQGAHS) are cleaved as a signal peptide. Position 26–33 (26–33 (GSPREDFR)) interacts with heparin. The Extracellular portion of the chain corresponds to 26–402 (GSPREDFRFC…TEVEATHKHY (377 aa)). 2 cysteine pairs are disulfide-bonded: C35/C91 and C121/C177. N-linked (GlcNAc...) asparagine glycans are attached at residues N39, N148, and N171. Position 190–200 (190–200 (LQHPQKAAKRP)) interacts with heparin. The GAIN-B domain maps to 224-395 (DTLSFEEDRV…AVLMVSSTEV (172 aa)). N234, N303, N324, and N341 each carry an N-linked (GlcNAc...) asparagine glycan. Disulfide bonds link C346/C377 and C366/C379. The GPS stretch occupies residues 346-395 (CVFWVEDPASSSTGSWSSAGCETVSRDTQTSCLCNHLTYFAVLMVSSTEV). The tract at residues 384–397 (YFAVLMVSSTEVEA) is stachel. The chain crosses the membrane as a helical span at residues 403-423 (LTLLSYVGCVISALACVFTIA). Topologically, residues 424–442 (AYLCSRRKSRDYTIKVHMN) are cytoplasmic. A helical membrane pass occupies residues 443–463 (LLSAVFLLDVSFLLSEPVALT). At 464–471 (GSEAACRT) the chain is on the extracellular side. The helical transmembrane segment at 472–492 (SAMFLHFSLLACLSWMGLEGY) threads the bilayer. Over 493–512 (NLYRLVVEVFGTYVPGYLLK) the chain is Cytoplasmic. The chain crosses the membrane as a helical span at residues 513-533 (LSIVGWGFPVFLVTLVALVDV). Residues 534–570 (NNYGPIILAVRRTPERVTYPSMCWIRDSLVSYVTNLG) are Extracellular-facing. Residues 571–591 (LFSLVFLFNLAMLATMVVQIL) traverse the membrane as a helical segment. The Cytoplasmic portion of the chain corresponds to 592 to 603 (RLRPHSQNWPHV). The chain crosses the membrane as a helical span at residues 604–624 (LTLLGLSLVLGLPWALVFFSF). Residues 625–630 (ASGTFQ) are Extracellular-facing. A helical membrane pass occupies residues 631-651 (LVILYLFSIITSFQGFLIFLW). Over 652-687 (YWSMRFQAQGGPSPLKNNSDSAKLPISSGSTSSSRI) the chain is Cytoplasmic. Residues 664-687 (SPLKNNSDSAKLPISSGSTSSSRI) form a disordered region. The segment covering 678-687 (SSGSTSSSRI) has biased composition (low complexity).

The protein belongs to the G-protein coupled receptor 2 family. LN-TM7 subfamily. In terms of assembly, heterodimer of 2 chains generated by proteolytic processing; the large extracellular N-terminal fragment (ADGRG1 NT) and the membrane-bound C-terminal fragment (ADGRG1-CT) predominantly remain associated and non-covalently linked. ADGRG1 NT self-associates in a trans-trans manner; the homophilic interaction enhances receptor signaling. Interacts with TGM2. Interacts with heparin; leading to the reduction of ADGRG1 shedding. Interacts with COL3A1. Part of a GPCR-tetraspanin complex at least consisting of ADGRG1, CD81, eventually CD9, and GNA11 in which CD81 is enhancing the association of ADGRG1 with GNA11. Autoproteolytically cleaved into 2 fragments; the large extracellular N-terminal fragment and the membroune-bound C-terminal fragment predominantly remain associated and non-covalently linked. Post-translationally, N-glycosylated. The secreted ADGRG1 N-terminal fragment is heavily glycosylated. In terms of processing, ubiquitinated. Undergoes polyubiquitination upon activation. As to expression, expressed in neural progenitor cells in fetal forbrain. Expressed in migrating neurons. Expressed in radial glial endfeet (at protein level). Expressed in peritubular myoid cells, Sertoli cells, and germ cells of the testis.

It localises to the cell membrane. It is found in the secreted. The protein resides in the membrane raft. Its activity is regulated as follows. Forms a heterodimer of 2 chains generated by proteolytic processing that remain associated through non-covalent interactions mediated by the GAIN-B domain. In the inactivated receptor, the Stachel sequence (also named stalk) is embedded in the GAIN-B domain, where it adopts a beta-strand conformation. On activation, the Stachel moves into the 7 transmembrane region and adopts a twisted hook-shaped configuration that forms contacts within the receptor, leading to coupling of a G-alpha protein, which activates signaling. The cleaved GAIN-B and N-terminal domains can then dissociate from the rest of the receptor. Activated by the small-molecule agonist, 3-alpha-acetoxydihydrodeoxygedunin (3-alpha-DOG). In terms of biological role, adhesion G-protein coupled receptor (aGPCR) for steroid hormone 17alpha-hydroxypregnenolone (17-OH), which is involved in cell adhesion and cell-cell interactions. Ligand binding causes a conformation change that triggers signaling via guanine nucleotide-binding proteins (G proteins) and modulates the activity of downstream effectors, such as RhoA pathway. ADGRG1 is coupled to G(12) and/or G(13) G proteins (GNA12 and GNA13, respectively) and mediates the activation Rho small GTPases. Acts as a potent suppressor of ferroptosis: binding to 17-OH-binding initiates signaling that down-regulates CD36 and alleviates ferroptosis-induced liver injury. Ligand-binding also induces cell adhesion activity via association with proteins such as collagen III/COL3A1 and TGM2. Mediates cell matrix adhesion in developing neurons and hematopoietic stem cells. Involved in cortical development, specifically in maintenance of the pial basement membrane integrity and in cortical lamination: association with COL3A1 in the developing brain inhibits neuronal migration via activation of the RhoA pathway. Together with TGM2, acts as a regulator of myelination and myelin repair in oligodendrocyte precursor cells. Acts as a hemostatic sensor of shear force: G protein-coupled receptor signaling is activated in response to shear force in platelets, promoting G(13) G protein signaling, and platelet shape change and aggregation in a COL3A1-dependent manner. Acts as an inhibitor of VEGFA production thereby inhibiting angiogenesis through a signaling pathway mediated by PRKCA. Plays a role in the maintenance of hematopoietic stem cells in bone marrow niche. Plays an essential role in testis development. Adhesion G-protein coupled receptor (aGPCR) for phosphatidylserine, which is involved in microglia-mediated synapse pruning during development. Required to maintain appropriate synaptic numbers in several brain regions in a time- and circuit-dependent fashion: phosphatidylserine-binding acts as a 'eat-me' signal for apoptotic cells, leading to microglial engulfment of phosphatidylserine-positive synapses. The protein is Adhesion G-protein coupled receptor G1 of Mus musculus (Mouse).